A 443-amino-acid polypeptide reads, in one-letter code: Carboxypeptidase M (443 aa).

The signal sequence occupies residues 1–17; that stretch reads MDFPCLWLGLLLPLVAA. In terms of domain architecture, Peptidase M14 spans 21–311; sequence NYHRQEGMEA…ASLIEYIKQV (291 aa). The N-linked (GlcNAc...) asparagine glycan is linked to asparagine 38. Zn(2+) contacts are provided by histidine 83 and glutamate 86. N-linked (GlcNAc...) asparagine glycosylation is found at asparagine 115 and asparagine 164. Disulfide bonds link cysteine 138–cysteine 285, cysteine 242–cysteine 284, and cysteine 341–cysteine 410. Histidine 190 provides a ligand contact to Zn(2+). Residue glutamate 281 is the Proton donor/acceptor of the active site. Asparagine 363 and asparagine 384 each carry an N-linked (GlcNAc...) asparagine glycan. The GPI-anchor amidated serine moiety is linked to residue serine 423. Residues 424 to 443 constitute a propeptide, removed in mature form; it reads AATKPSLFLFLVSLLHIFFK.

It belongs to the peptidase M14 family. Zn(2+) is required as a cofactor.

The protein localises to the cell membrane. It carries out the reaction Cleavage of C-terminal arginine or lysine residues from polypeptides.. Its activity is regulated as follows. Inhibited by O-phenanthroline and MGTA and activated by cobalt. Its function is as follows. Specifically removes C-terminal basic residues (Arg or Lys) from peptides and proteins. It is believed to play important roles in the control of peptide hormone and growth factor activity at the cell surface, and in the membrane-localized degradation of extracellular proteins. In Homo sapiens (Human), this protein is Carboxypeptidase M (CPM).